The primary structure comprises 568 residues: Kelch-like protein 12 (568 aa).

A BTB domain is found at 33–100 (CDVTLRVEQK…VYTETVHVTV (68 aa)). Positions 135 to 236 (CLGIRDFAET…LTPRYITDVI (102 aa)) constitute a BACK domain. Kelch repeat units lie at residues 282–329 (VLLV…SLHD), 331–379 (IYVI…TLGD), 380–426 (MIYV…VASG), 427–473 (VIYC…LLND), 474–520 (HIYV…VLRG), and 522–567 (LYAI…ALRE).

In terms of assembly, component of the BCR(KLHL12) E3 ubiquitin ligase complex, at least composed of CUL3 and KLHL12 and RBX1. This complex interacts with DVL3 upon activation of the Wnt signaling pathway by WNT3A. Interacts with DRD4, KLHL2 and SEC31A. Interacts with PEF1 and PDCD6/ALG-2; interaction takes place in response to cytosolic calcium increase and leads to bridge together the BCR(KLHL12) complex and SEC31 (SEC31A or SEC31B). Post-translationally, ubiquitinated by the SCF(FBXL17) complex, leading to its degradation by the proteasome: ubiquitination by the SCF(FBXL17) complex takes place when aberrant BTB domain dimers are formed.

It localises to the cytoplasmic vesicle. Its subcellular location is the COPII-coated vesicle. Its pathway is protein modification; protein ubiquitination. Substrate-specific adapter of a BCR (BTB-CUL3-RBX1) E3 ubiquitin ligase complex that acts as a negative regulator of Wnt signaling pathway and ER-Golgi transport. The BCR(KLHL12) complex is involved in ER-Golgi transport by regulating the size of COPII coats, thereby playing a key role in collagen export, which is required for embryonic stem (ES) cells division: BCR(KLHL12) acts by mediating monoubiquitination of SEC31 (SEC31A or SEC31B). The BCR(KLHL12) complex is also involved in neural crest specification: in response to cytosolic calcium increase, interacts with the heterodimer formed with PEF1 and PDCD6/ALG-2, leading to bridge together the BCR(KLHL12) complex and SEC31 (SEC31A or SEC31B), promoting monoubiquitination of SEC31 and subsequent collagen export. As part of the BCR(KLHL12) complex, also acts as a negative regulator of the Wnt signaling pathway by mediating ubiquitination and subsequent proteolysis of DVL3. The BCR(KLHL12) complex also mediates polyubiquitination of DRD4 and PEF1, without leading to degradation of these proteins. This is Kelch-like protein 12 (KLHL12) from Bos taurus (Bovine).